The following is a 197-amino-acid chain: Recombination protein RecR (197 aa).

The C4-type zinc finger occupies 57–72 (CSVCFGITEDDPCRFC). One can recognise a Toprim domain in the interval 79–174 (GAICVVEEPQ…RVTRLAHGIP (96 aa)).

Belongs to the RecR family.

Its function is as follows. May play a role in DNA repair. It seems to be involved in an RecBC-independent recombinational process of DNA repair. It may act with RecF and RecO. In Geobacter sulfurreducens (strain ATCC 51573 / DSM 12127 / PCA), this protein is Recombination protein RecR.